Reading from the N-terminus, the 103-residue chain is Ig kappa-b4 chain C region (103 aa).

The Ig-like domain maps to 5 to 95 (PTVLIFPPAA…KVTQGTTSVV (91 aa)). A disulfide bond links C26 and C85.

This chain is Ig kappa-b4 chain C region, found in Oryctolagus cuniculus (Rabbit).